Reading from the N-terminus, the 491-residue chain is Ketol-acid reductoisomerase (NADP(+)) (491 aa).

The 194-residue stretch at A15 to S208 folds into the KARI N-terminal Rossmann domain. Residues C45 to Q48, R68, R76, S78, and D108 to Q110 each bind NADP(+). H132 is an active-site residue. G158 is an NADP(+) binding site. KARI C-terminal knotted domains follow at residues S209–Q344 and Y345–M484. Mg(2+) contacts are provided by D217, E221, E389, and E393. S414 lines the substrate pocket.

The protein belongs to the ketol-acid reductoisomerase family. It depends on Mg(2+) as a cofactor.

It carries out the reaction (2R)-2,3-dihydroxy-3-methylbutanoate + NADP(+) = (2S)-2-acetolactate + NADPH + H(+). The catalysed reaction is (2R,3R)-2,3-dihydroxy-3-methylpentanoate + NADP(+) = (S)-2-ethyl-2-hydroxy-3-oxobutanoate + NADPH + H(+). It participates in amino-acid biosynthesis; L-isoleucine biosynthesis; L-isoleucine from 2-oxobutanoate: step 2/4. Its pathway is amino-acid biosynthesis; L-valine biosynthesis; L-valine from pyruvate: step 2/4. In terms of biological role, involved in the biosynthesis of branched-chain amino acids (BCAA). Catalyzes an alkyl-migration followed by a ketol-acid reduction of (S)-2-acetolactate (S2AL) to yield (R)-2,3-dihydroxy-isovalerate. In the isomerase reaction, S2AL is rearranged via a Mg-dependent methyl migration to produce 3-hydroxy-3-methyl-2-ketobutyrate (HMKB). In the reductase reaction, this 2-ketoacid undergoes a metal-dependent reduction by NADPH to yield (R)-2,3-dihydroxy-isovalerate. The polypeptide is Ketol-acid reductoisomerase (NADP(+)) (Escherichia coli O157:H7).